The primary structure comprises 92 residues: Small ribosomal subunit protein uS19c (92 aa).

Belongs to the universal ribosomal protein uS19 family.

It localises to the plastid. The protein resides in the chloroplast. Functionally, protein S19 forms a complex with S13 that binds strongly to the 16S ribosomal RNA. The polypeptide is Small ribosomal subunit protein uS19c (Chloranthus spicatus (Chulantree)).